The sequence spans 331 residues: Biotin synthase (331 aa).

Residues 52-281 enclose the Radical SAM core domain; sequence FFQNKVKLNM…TKEIRVSGGR (230 aa). [4Fe-4S] cluster is bound by residues C70, C74, and C77. Residues C114, C146, C206, and R276 each coordinate [2Fe-2S] cluster.

It belongs to the radical SAM superfamily. Biotin synthase family. Homodimer. [4Fe-4S] cluster is required as a cofactor. The cofactor is [2Fe-2S] cluster.

The catalysed reaction is (4R,5S)-dethiobiotin + (sulfur carrier)-SH + 2 reduced [2Fe-2S]-[ferredoxin] + 2 S-adenosyl-L-methionine = (sulfur carrier)-H + biotin + 2 5'-deoxyadenosine + 2 L-methionine + 2 oxidized [2Fe-2S]-[ferredoxin]. It participates in cofactor biosynthesis; biotin biosynthesis; biotin from 7,8-diaminononanoate: step 2/2. In terms of biological role, catalyzes the conversion of dethiobiotin (DTB) to biotin by the insertion of a sulfur atom into dethiobiotin via a radical-based mechanism. The protein is Biotin synthase of Bacillus pumilus (strain SAFR-032).